We begin with the raw amino-acid sequence, 302 residues long: tRNA pseudouridine synthase B (302 aa).

The active-site Nucleophile is aspartate 45.

The protein belongs to the pseudouridine synthase TruB family. Type 1 subfamily.

The enzyme catalyses uridine(55) in tRNA = pseudouridine(55) in tRNA. Functionally, responsible for synthesis of pseudouridine from uracil-55 in the psi GC loop of transfer RNAs. This is tRNA pseudouridine synthase B from Francisella philomiragia subsp. philomiragia (strain ATCC 25017 / CCUG 19701 / FSC 153 / O#319-036).